Here is a 350-residue protein sequence, read N- to C-terminus: Bifunctional methylenetetrahydrofolate dehydrogenase/cyclohydrolase, mitochondrial (350 aa).

The transit peptide at 1-35 (MAATSLMSALAARLLQPAHSCSLRLRPFHLAAVRN) directs the protein to the mitochondrion. N6-acetyllysine; alternate is present on Lys50. Residue Lys50 forms a Glycyl lysine isopeptide (Lys-Gly) (interchain with G-Cter in SUMO2); alternate linkage. Residues 84 to 88 (YVLNK) and 131 to 133 (VQL) contribute to the substrate site. Residues 200–202 (GRS) and Arg233 contribute to the NAD(+) site. 309–313 (PGGVG) contributes to the substrate binding site.

It belongs to the tetrahydrofolate dehydrogenase/cyclohydrolase family. In terms of assembly, homodimer. Mg(2+) is required as a cofactor.

The protein localises to the mitochondrion. It catalyses the reaction (6R)-5,10-methylene-5,6,7,8-tetrahydrofolate + NAD(+) = (6R)-5,10-methenyltetrahydrofolate + NADH. The catalysed reaction is (6R)-5,10-methenyltetrahydrofolate + H2O = (6R)-10-formyltetrahydrofolate + H(+). Although its dehydrogenase activity is NAD-specific, it can also utilize NADP at a reduced efficiency. This is Bifunctional methylenetetrahydrofolate dehydrogenase/cyclohydrolase, mitochondrial (MTHFD2) from Homo sapiens (Human).